The chain runs to 312 residues: Porphobilinogen deaminase (312 aa).

Residue Cys-235 is modified to S-(dipyrrolylmethanemethyl)cysteine.

This sequence belongs to the HMBS family. Monomer. Dipyrromethane is required as a cofactor.

It carries out the reaction 4 porphobilinogen + H2O = hydroxymethylbilane + 4 NH4(+). Its pathway is porphyrin-containing compound metabolism; protoporphyrin-IX biosynthesis; coproporphyrinogen-III from 5-aminolevulinate: step 2/4. Tetrapolymerization of the monopyrrole PBG into the hydroxymethylbilane pre-uroporphyrinogen in several discrete steps. This is Porphobilinogen deaminase from Mycolicibacterium gilvum (strain PYR-GCK) (Mycobacterium gilvum (strain PYR-GCK)).